Reading from the N-terminus, the 699-residue chain is Osmotic avoidance abnormal protein 3 (699 aa).

A Kinesin motor domain is found at 4–327 (SVRVAVRCRP…LRYANRAKNI (324 aa)). 87-94 (GQTGSGKT) provides a ligand contact to ATP. Positions 339–523 (DALLREYQEE…EIEDLHGEFE (185 aa)) form a coiled coil.

This sequence belongs to the TRAFAC class myosin-kinesin ATPase superfamily. Kinesin family. Kinesin II subfamily. As to expression, expressed in an exclusive set of 26 chemosensory neurons whose dendritic endings are exposed to the external environment; six IL2 neurons of the inner labial sensilla, 8 pairs of amphid neurons in the head, and 2 pairs of phasmid neurons in the tail.

It is found in the cytoplasm. The protein localises to the cytoskeleton. The protein resides in the cell projection. Its subcellular location is the cilium. It localises to the cilium axoneme. It is found in the cilium basal body. Functionally, kinesin motor protein which is required for the anterograde intraflagellar transport (IFT) along the middle segment of the sensory neuron cilia together with the kinesin II motor complex (composed of klp-11, klp-20 and kap-1) and on its own, is required for IFT along the distal segment. In addition, regulates the length of cilia. May have a role during neurogenesis and axonal transport. This Caenorhabditis elegans protein is Osmotic avoidance abnormal protein 3.